We begin with the raw amino-acid sequence, 452 residues long: Glutamyl-tRNA(Gln) amidotransferase subunit A (452 aa).

Catalysis depends on charge relay system residues K56 and S131. The active-site Acyl-ester intermediate is the S155.

This sequence belongs to the amidase family. GatA subfamily. Heterotrimer of A, B and C subunits.

The catalysed reaction is L-glutamyl-tRNA(Gln) + L-glutamine + ATP + H2O = L-glutaminyl-tRNA(Gln) + L-glutamate + ADP + phosphate + H(+). In terms of biological role, allows the formation of correctly charged Gln-tRNA(Gln) through the transamidation of misacylated Glu-tRNA(Gln) in organisms which lack glutaminyl-tRNA synthetase. The reaction takes place in the presence of glutamine and ATP through an activated gamma-phospho-Glu-tRNA(Gln). In Campylobacter concisus (strain 13826), this protein is Glutamyl-tRNA(Gln) amidotransferase subunit A.